Reading from the N-terminus, the 638-residue chain is Phosphomethylpyrimidine synthase (638 aa).

Substrate-binding positions include N236, M265, Y294, H330, 350 to 352, 391 to 394, and E430; these read SRG and DGLR. H434 contributes to the Zn(2+) binding site. Y457 is a binding site for substrate. H498 contacts Zn(2+). [4Fe-4S] cluster is bound by residues C578, C581, and C586. Residues 608 to 624 are compositionally biased toward low complexity; it reads AEGASQQEAEQGMQEMS. The interval 608-633 is disordered; sequence AEGASQQEAEQGMQEMSQKYKDAGRR.

The protein belongs to the ThiC family. Homodimer. [4Fe-4S] cluster serves as cofactor.

It catalyses the reaction 5-amino-1-(5-phospho-beta-D-ribosyl)imidazole + S-adenosyl-L-methionine = 4-amino-2-methyl-5-(phosphooxymethyl)pyrimidine + CO + 5'-deoxyadenosine + formate + L-methionine + 3 H(+). Its pathway is cofactor biosynthesis; thiamine diphosphate biosynthesis. Catalyzes the synthesis of the hydroxymethylpyrimidine phosphate (HMP-P) moiety of thiamine from aminoimidazole ribotide (AIR) in a radical S-adenosyl-L-methionine (SAM)-dependent reaction. This is Phosphomethylpyrimidine synthase from Hahella chejuensis (strain KCTC 2396).